A 426-amino-acid chain; its full sequence is D-tagatose-1,6-bisphosphate aldolase subunit KbaZ (426 aa).

It belongs to the GatZ/KbaZ family. KbaZ subfamily. In terms of assembly, forms a complex with KbaY.

It participates in carbohydrate metabolism; D-tagatose 6-phosphate degradation; D-glyceraldehyde 3-phosphate and glycerone phosphate from D-tagatose 6-phosphate: step 2/2. Functionally, component of the tagatose-1,6-bisphosphate aldolase KbaYZ that is required for full activity and stability of the Y subunit. Could have a chaperone-like function for the proper and stable folding of KbaY. When expressed alone, KbaZ does not show any aldolase activity. The protein is D-tagatose-1,6-bisphosphate aldolase subunit KbaZ of Shigella flexneri.